A 226-amino-acid polypeptide reads, in one-letter code: UPF0173 metal-dependent hydrolase Msed_2125 (226 aa).

Belongs to the UPF0173 family.

This Metallosphaera sedula (strain ATCC 51363 / DSM 5348 / JCM 9185 / NBRC 15509 / TH2) protein is UPF0173 metal-dependent hydrolase Msed_2125.